The following is a 335-amino-acid chain: Glyceraldehyde-3-phosphate dehydrogenase (335 aa).

NAD(+)-binding positions include 12-13 (RI), aspartate 34, and arginine 79. Residues 150–152 (SCT), threonine 181, 210–211 (TG), and arginine 233 contribute to the D-glyceraldehyde 3-phosphate site. Cysteine 151 acts as the Nucleophile in catalysis. Residue asparagine 315 coordinates NAD(+).

Belongs to the glyceraldehyde-3-phosphate dehydrogenase family. Homotetramer.

The protein localises to the cytoplasm. It carries out the reaction D-glyceraldehyde 3-phosphate + phosphate + NAD(+) = (2R)-3-phospho-glyceroyl phosphate + NADH + H(+). The protein operates within carbohydrate degradation; glycolysis; pyruvate from D-glyceraldehyde 3-phosphate: step 1/5. The protein is Glyceraldehyde-3-phosphate dehydrogenase (GPD) of Ogataea parapolymorpha (strain ATCC 26012 / BCRC 20466 / JCM 22074 / NRRL Y-7560 / DL-1) (Yeast).